We begin with the raw amino-acid sequence, 487 residues long: Iron-sulfur cluster assembly SufBD family protein ycf24 (487 aa).

This sequence belongs to the iron-sulfur cluster assembly SufBD family.

Its subcellular location is the plastid. The protein localises to the chloroplast. The sequence is that of Iron-sulfur cluster assembly SufBD family protein ycf24 (ycf24) from Porphyra purpurea (Red seaweed).